Here is a 330-residue protein sequence, read N- to C-terminus: Phosphate acyltransferase (330 aa).

Belongs to the PlsX family. In terms of assembly, homodimer. Probably interacts with PlsY.

The protein localises to the cytoplasm. The catalysed reaction is a fatty acyl-[ACP] + phosphate = an acyl phosphate + holo-[ACP]. It participates in lipid metabolism; phospholipid metabolism. Catalyzes the reversible formation of acyl-phosphate (acyl-PO(4)) from acyl-[acyl-carrier-protein] (acyl-ACP). This enzyme utilizes acyl-ACP as fatty acyl donor, but not acyl-CoA. This Streptococcus agalactiae serotype Ia (strain ATCC 27591 / A909 / CDC SS700) protein is Phosphate acyltransferase.